The chain runs to 198 residues: FMN-dependent NADH:quinone oxidoreductase (198 aa).

FMN is bound by residues Ser10 and 16–18 (SIS).

Belongs to the azoreductase type 1 family. Homodimer. FMN serves as cofactor.

It carries out the reaction 2 a quinone + NADH + H(+) = 2 a 1,4-benzosemiquinone + NAD(+). The catalysed reaction is N,N-dimethyl-1,4-phenylenediamine + anthranilate + 2 NAD(+) = 2-(4-dimethylaminophenyl)diazenylbenzoate + 2 NADH + 2 H(+). Functionally, quinone reductase that provides resistance to thiol-specific stress caused by electrophilic quinones. Also exhibits azoreductase activity. Catalyzes the reductive cleavage of the azo bond in aromatic azo compounds to the corresponding amines. This chain is FMN-dependent NADH:quinone oxidoreductase, found in Mycoplasmopsis pulmonis (strain UAB CTIP) (Mycoplasma pulmonis).